A 356-amino-acid chain; its full sequence is Probable butyrate kinase (356 aa).

Belongs to the acetokinase family.

Its subcellular location is the cytoplasm. The enzyme catalyses butanoate + ATP = butanoyl phosphate + ADP. The sequence is that of Probable butyrate kinase from Coprothermobacter proteolyticus (strain ATCC 35245 / DSM 5265 / OCM 4 / BT).